A 207-amino-acid chain; its full sequence is Vascular endothelial growth factor B (207 aa).

Positions 1 to 21 (MSPLLRRLLLAALLQLAPAQA) are cleaved as a signal peptide. 3 disulfide bridges follow: Cys47–Cys89, Cys78–Cys122, and Cys82–Cys124. The segment covering 122–139 (CECRPKKKDSAVKPDRAA) has biased composition (basic and acidic residues). The tract at residues 122 to 207 (CECRPKKKDS…AASSVAKGGA (86 aa)) is disordered. A compositionally biased stretch (low complexity) spans 174-207 (PSAHAAPSTTSALTPGPAAAAADAAASSVAKGGA).

It belongs to the PDGF/VEGF growth factor family. Homodimer; disulfide-linked. Can also form heterodimer with VEGF. VEGF-B186 is O-glycosylated. Expressed in all tissues except liver. Highest levels found in heart, skeletal muscle and pancreas.

The protein localises to the secreted. Functionally, growth factor for endothelial cells. VEGF-B167 binds heparin and neuropilin-1 whereas the binding to neuropilin-1 of VEGF-B186 is regulated by proteolysis. This is Vascular endothelial growth factor B (VEGFB) from Homo sapiens (Human).